A 612-amino-acid chain; its full sequence is UvrABC system protein C (612 aa).

A GIY-YIG domain is found at 20–98 (THSGVYRMLD…IKQHRPKYNI (79 aa)). The UVR domain maps to 208–243 (SSVLEEISAKMYQASEDMEYEKAQVYRDQLVVLRKL).

Belongs to the UvrC family. In terms of assembly, interacts with UvrB in an incision complex.

It is found in the cytoplasm. The UvrABC repair system catalyzes the recognition and processing of DNA lesions. UvrC both incises the 5' and 3' sides of the lesion. The N-terminal half is responsible for the 3' incision and the C-terminal half is responsible for the 5' incision. The polypeptide is UvrABC system protein C (Francisella tularensis subsp. tularensis (strain FSC 198)).